The chain runs to 371 residues: 4-hydroxy-3-methylbut-2-en-1-yl diphosphate synthase (flavodoxin) (371 aa).

Residues cysteine 270, cysteine 273, cysteine 305, and glutamate 312 each coordinate [4Fe-4S] cluster.

Belongs to the IspG family. The cofactor is [4Fe-4S] cluster.

The enzyme catalyses (2E)-4-hydroxy-3-methylbut-2-enyl diphosphate + oxidized [flavodoxin] + H2O + 2 H(+) = 2-C-methyl-D-erythritol 2,4-cyclic diphosphate + reduced [flavodoxin]. Its pathway is isoprenoid biosynthesis; isopentenyl diphosphate biosynthesis via DXP pathway; isopentenyl diphosphate from 1-deoxy-D-xylulose 5-phosphate: step 5/6. Functionally, converts 2C-methyl-D-erythritol 2,4-cyclodiphosphate (ME-2,4cPP) into 1-hydroxy-2-methyl-2-(E)-butenyl 4-diphosphate. The chain is 4-hydroxy-3-methylbut-2-en-1-yl diphosphate synthase (flavodoxin) from Shewanella frigidimarina (strain NCIMB 400).